The chain runs to 932 residues: DNA mismatch repair protein MutS (932 aa).

An ATP-binding site is contributed by 615–622; the sequence is GPNMAGKS.

This sequence belongs to the DNA mismatch repair MutS family.

This protein is involved in the repair of mismatches in DNA. It is possible that it carries out the mismatch recognition step. This protein has a weak ATPase activity. This Clostridium botulinum (strain Langeland / NCTC 10281 / Type F) protein is DNA mismatch repair protein MutS.